Consider the following 143-residue polypeptide: Nucleoside diphosphate kinase (143 aa).

Positions 11, 59, 87, 93, 104, and 114 each coordinate ATP. Histidine 117 serves as the catalytic Pros-phosphohistidine intermediate.

Belongs to the NDK family. As to quaternary structure, homotetramer. Mg(2+) serves as cofactor.

It is found in the cytoplasm. The catalysed reaction is a 2'-deoxyribonucleoside 5'-diphosphate + ATP = a 2'-deoxyribonucleoside 5'-triphosphate + ADP. It catalyses the reaction a ribonucleoside 5'-diphosphate + ATP = a ribonucleoside 5'-triphosphate + ADP. In terms of biological role, major role in the synthesis of nucleoside triphosphates other than ATP. The ATP gamma phosphate is transferred to the NDP beta phosphate via a ping-pong mechanism, using a phosphorylated active-site intermediate. This Alcanivorax borkumensis (strain ATCC 700651 / DSM 11573 / NCIMB 13689 / SK2) protein is Nucleoside diphosphate kinase.